A 308-amino-acid chain; its full sequence is Reaction center protein M chain (308 aa).

The next 3 helical transmembrane spans lie at 54 to 80 (GSLGVLSLFSGLMWFFTIGIWFWYQAG), 111 to 140 (KEGGLWLIASFFMFVAVWSWWGRTYLRAQA), and 143 to 168 (MGKHTAWAFLSAIWLWMVLGFIRPIL). 2 residues coordinate (7R,8Z)-bacteriochlorophyll b: H183 and H203. Residues 198–226 (FYNPFHGLSIAFLYGSALLFAMHGATILA) form a helical membrane-spanning segment. Fe cation is bound by residues H220 and E235. Residue W253 participates in a ubiquinone binding. The chain crosses the membrane as a helical span at residues 260–286 (NATMEGIHRWAIWMAVLVTLTGGIGIL). A Fe cation-binding site is contributed by H267.

It belongs to the reaction center PufL/M/PsbA/D family. In terms of assembly, reaction center is composed of four bacteriochlorophylls, two bacteriopheophytins, two ubiquinones, one iron, and three highly hydrophobic polypeptide chains (designated L, M, and H).

It is found in the cellular chromatophore membrane. In terms of biological role, the reaction center is a membrane-bound complex that mediates the initial photochemical event in the electron transfer process of photosynthesis. The sequence is that of Reaction center protein M chain (pufM) from Cereibacter sphaeroides (strain ATCC 17023 / DSM 158 / JCM 6121 / CCUG 31486 / LMG 2827 / NBRC 12203 / NCIMB 8253 / ATH 2.4.1.) (Rhodobacter sphaeroides).